A 339-amino-acid polypeptide reads, in one-letter code: Tetraacyldisaccharide 4'-kinase (339 aa).

62–69 (VAGGTGKT) provides a ligand contact to ATP.

The protein belongs to the LpxK family.

The enzyme catalyses a lipid A disaccharide + ATP = a lipid IVA + ADP + H(+). It functions in the pathway glycolipid biosynthesis; lipid IV(A) biosynthesis; lipid IV(A) from (3R)-3-hydroxytetradecanoyl-[acyl-carrier-protein] and UDP-N-acetyl-alpha-D-glucosamine: step 6/6. Its function is as follows. Transfers the gamma-phosphate of ATP to the 4'-position of a tetraacyldisaccharide 1-phosphate intermediate (termed DS-1-P) to form tetraacyldisaccharide 1,4'-bis-phosphate (lipid IVA). The sequence is that of Tetraacyldisaccharide 4'-kinase from Xylella fastidiosa (strain 9a5c).